Here is a 167-residue protein sequence, read N- to C-terminus: Ubiquitin-fold modifier-conjugating enzyme 1 (167 aa).

Cys116 acts as the Glycyl thioester intermediate in catalysis.

It belongs to the ubiquitin-conjugating enzyme family. UFC1 subfamily. As to quaternary structure, interacts with UBA5 (via C-terminus). Interacts with UFL1. Interacts with UFM1.

Its function is as follows. E2-like enzyme which specifically catalyzes the second step in ufmylation. Accepts the ubiquitin-like modifier UFM1 from the E1 enzyme UBA5 and forms an intermediate with UFM1 via a thioester linkage. Ufmylation is involved in various processes, such as ribosome recycling, response to DNA damage, interferon response or reticulophagy (also called ER-phagy). In Osmerus mordax (Rainbow smelt), this protein is Ubiquitin-fold modifier-conjugating enzyme 1.